We begin with the raw amino-acid sequence, 973 residues long: Protein HypA (973 aa).

The sequence is that of Protein HypA (hypA) from Clostridium perfringens (strain 13 / Type A).